Consider the following 73-residue polypeptide: MRMSFYQFLMTQRNPNSADEVQQFANNAFFDTTFPKHSEDFDEISHYLEENADYLPSMTIFDEAWQRYIDAMN.

Belongs to the UPF0346 family.

This chain is UPF0346 protein Lreu_0775, found in Limosilactobacillus reuteri (strain DSM 20016) (Lactobacillus reuteri).